Reading from the N-terminus, the 566-residue chain is Type IV pilus assembly ATPase PilB (566 aa).

Residue 326–333 (GPTGSGKT) participates in ATP binding. The Zn(2+) site is built by cysteine 459, cysteine 462, cysteine 494, and cysteine 497.

It belongs to the GSP E family. As to quaternary structure, homohexamer. Interacts with PilC. Interacts with FimX; this interaction positively regulates T4P assembly and twitching motility by promoting the activity of the PilB ATPase.

The protein localises to the cytoplasm. Functionally, ATPase component of the type IV pilus (T4P) that plays a role in surface and host cell adhesion, colonization, biofilm maturation, virulence, and twitching, a form of surface-associated motility facilitated by cycles of extension, adhesion, and retraction of T4P fibers. Acts as a molecular motor to provide the energy that is required for biogenesis of the pilus and the extrusion of substrates generated in the cytoplasm. PilB ATPase activity is also essential for T4P extension while antagonist PilT ATPase activity is required for T4P retraction. In Pseudomonas aeruginosa (strain ATCC 15692 / DSM 22644 / CIP 104116 / JCM 14847 / LMG 12228 / 1C / PRS 101 / PAO1), this protein is Type IV pilus assembly ATPase PilB (pilB).